The sequence spans 151 residues: Large ribosomal subunit protein uL22 (151 aa).

This sequence belongs to the universal ribosomal protein uL22 family. In terms of assembly, part of the 50S ribosomal subunit.

Its function is as follows. This protein binds specifically to 23S rRNA. It makes multiple contacts with different domains of the 23S rRNA in the assembled 50S subunit and ribosome. Functionally, the globular domain of the protein is located near the polypeptide exit tunnel on the outside of the subunit, while an extended beta-hairpin is found that lines the wall of the exit tunnel in the center of the 70S ribosome. The protein is Large ribosomal subunit protein uL22 of Thermofilum pendens (strain DSM 2475 / Hrk 5).